A 115-amino-acid polypeptide reads, in one-letter code: Peptidyl-tRNA hydrolase (115 aa).

Belongs to the PTH2 family.

Its subcellular location is the cytoplasm. It carries out the reaction an N-acyl-L-alpha-aminoacyl-tRNA + H2O = an N-acyl-L-amino acid + a tRNA + H(+). Its function is as follows. The natural substrate for this enzyme may be peptidyl-tRNAs which drop off the ribosome during protein synthesis. This is Peptidyl-tRNA hydrolase from Archaeoglobus fulgidus (strain ATCC 49558 / DSM 4304 / JCM 9628 / NBRC 100126 / VC-16).